The chain runs to 493 residues: Serine/threonine-protein kinase 3 (493 aa).

Residues 26-277 enclose the Protein kinase domain; sequence FDVLEKLGEG…ATQLLQHPFI (252 aa). ATP is bound by residues 32 to 40 and Lys-55; that span reads LGEGSYGSV. The active-site Proton acceptor is Asp-145. At Thr-179 the chain carries Phosphothreonine; by autocatalysis. The stretch at 286–327 forms a coiled coil; it reads LRDLITEAMDIKAKRHEELQRELEEEDENSEEDELDSHTMVK. 2 disordered regions span residues 303–336 and 369–414; these read ELQR…AGTM and DDEE…NCNQ. The segment covering 308–320 has biased composition (acidic residues); it reads LEEEDENSEEDEL. Over residues 325–336 the composition is skewed to polar residues; it reads MVKTNSESAGTM. Positions 369–378 are enriched in acidic residues; the sequence is DDEEEEEEED. The segment covering 398–410 has biased composition (basic and acidic residues); that stretch reads YFDKQDSKNKPHD. Residues 439–486 form the SARAH domain; it reads FDFLKNLSFEELQMRLKALDPMMEREIEDLRQRYNAKRQPILDAMDAK. Positions 444–477 form a coiled coil; the sequence is NLSFEELQMRLKALDPMMEREIEDLRQRYNAKRQ.

The protein belongs to the protein kinase superfamily. STE Ser/Thr protein kinase family. STE20 subfamily. In terms of assembly, homodimer; mediated via the coiled-coil region. Mg(2+) serves as cofactor.

It localises to the cytoplasm. It is found in the nucleus. It carries out the reaction L-seryl-[protein] + ATP = O-phospho-L-seryl-[protein] + ADP + H(+). The catalysed reaction is L-threonyl-[protein] + ATP = O-phospho-L-threonyl-[protein] + ADP + H(+). With respect to regulation, inhibited by the C-terminal non-catalytic region. Activated by caspase-cleavage. Full activation also requires homodimerization and autophosphorylation of Thr-179. Functionally, stress-activated, pro-apoptotic kinase which, following caspase-cleavage, enters the nucleus and induces chromatin condensation followed by internucleosomal DNA fragmentation. Key component of the Hippo signaling pathway which plays a pivotal role in organ size control and tumor suppression by restricting proliferation and promoting apoptosis. The core of this pathway is composed of a kinase cascade wherein stk3/mst2 and stk4/mst1, in complex with its regulatory protein sav1, phosphorylates and activates lats1/2 in complex with its regulatory protein mob1, which in turn phosphorylates and inactivates yap1 oncoprotein and wwtr1/taz. Phosphorylation of yap1 by lats2 inhibits its translocation into the nucleus to regulate cellular genes important for cell proliferation, cell death, and cell migration. In Xenopus laevis (African clawed frog), this protein is Serine/threonine-protein kinase 3 (stk3).